The following is a 344-amino-acid chain: 2,3,4,5-tetrahydropyridine-2,6-dicarboxylate N-succinyltransferase (344 aa).

Mg(2+) is bound at residue Glu-205. Glu-221 acts as the Acyl-anhydride intermediate in catalysis. Succinyl-CoA is bound by residues Arg-223, Gly-238, Ser-241, Ala-264, 279-280 (EA), Gly-287, Lys-304, and 317-320 (RRNS).

It belongs to the type 2 tetrahydrodipicolinate N-succinyltransferase family. Homotrimer.

The protein localises to the cytoplasm. The catalysed reaction is (S)-2,3,4,5-tetrahydrodipicolinate + succinyl-CoA + H2O = (S)-2-succinylamino-6-oxoheptanedioate + CoA. Its pathway is amino-acid biosynthesis; L-lysine biosynthesis via DAP pathway; LL-2,6-diaminopimelate from (S)-tetrahydrodipicolinate (succinylase route): step 1/3. Catalyzes the conversion of the cyclic tetrahydrodipicolinate (THDP) into the acyclic N-succinyl-L-2-amino-6-oxopimelate using succinyl-CoA. In Pseudomonas putida (strain ATCC 47054 / DSM 6125 / CFBP 8728 / NCIMB 11950 / KT2440), this protein is 2,3,4,5-tetrahydropyridine-2,6-dicarboxylate N-succinyltransferase.